The following is a 285-amino-acid chain: Undecaprenyl-diphosphatase 2 (285 aa).

Transmembrane regions (helical) follow at residues 5 to 25 (MDLLHVFILAVIQGLAELLPV), 47 to 67 (MTFLLVMLHTGTMFAVIVYFW), 86 to 106 (WYVLLATAITGVLGLLLQSLI), 122 to 142 (LFSNSKLMAAALAAAGILIIL), 156 to 176 (LPSAMIIGAVQALCLPFRGFS), 198 to 218 (FSFALAVVLTPAVIVKELVRL), 235 to 255 (SLLLPSIFGMVFSFLTGLLAL), and 265 to 285 (GRWYLFGIYCLAFSGVVLTLA).

Belongs to the UppP family.

The protein localises to the cell inner membrane. It catalyses the reaction di-trans,octa-cis-undecaprenyl diphosphate + H2O = di-trans,octa-cis-undecaprenyl phosphate + phosphate + H(+). In terms of biological role, catalyzes the dephosphorylation of undecaprenyl diphosphate (UPP). Confers resistance to bacitracin. In Acinetobacter baylyi (strain ATCC 33305 / BD413 / ADP1), this protein is Undecaprenyl-diphosphatase 2.